The following is a 306-amino-acid chain: Glutamyl-Q tRNA(Asp) synthetase (306 aa).

L-glutamate contacts are provided by residues 4–8 and Glu-40; that span reads RYAPS. Positions 7 to 17 match the 'HIGH' region motif; sequence PSPSGDLHFGN. Positions 92, 94, 113, and 117 each coordinate Zn(2+). 2 residues coordinate L-glutamate: Tyr-180 and Arg-198. Positions 236 to 240 match the 'KMSKS' region motif; it reads RLAKR. Lys-239 serves as a coordination point for ATP.

The protein belongs to the class-I aminoacyl-tRNA synthetase family. GluQ subfamily. Zn(2+) is required as a cofactor.

Functionally, catalyzes the tRNA-independent activation of glutamate in presence of ATP and the subsequent transfer of glutamate onto a tRNA(Asp). Glutamate is transferred on the 2-amino-5-(4,5-dihydroxy-2-cyclopenten-1-yl) moiety of the queuosine in the wobble position of the QUC anticodon. This Corynebacterium efficiens (strain DSM 44549 / YS-314 / AJ 12310 / JCM 11189 / NBRC 100395) protein is Glutamyl-Q tRNA(Asp) synthetase.